A 177-amino-acid chain; its full sequence is Disulfide bond formation protein B (177 aa).

Residues 1–14 (MLALLKQFSEKRFV) lie on the Cytoplasmic side of the membrane. The helical transmembrane segment at 15–31 (WFLLAFSSLALESTALY) threads the bilayer. The Periplasmic segment spans residues 32–49 (FQYGMGLQPCVLCVYERL). The cysteines at positions 41 and 44 are disulfide-linked. Residues 50–65 (AMIGLFVAGTIALLQP) traverse the membrane as a helical segment. The Cytoplasmic segment spans residues 66–72 (RVFILRL). A helical membrane pass occupies residues 73–90 (IALALGLFSSIKGLLISF). The Periplasmic segment spans residues 91–145 (RHLDLQMNPAPWKQCEFIPNFPETLPFHQWFPFIFNPTGSCNESQWSLFGLTMVQ). Cys-105 and Cys-131 are joined by a disulfide. A helical membrane pass occupies residues 146–164 (WLVVIFSLYVVILTLLLIA). The Cytoplasmic segment spans residues 165–177 (QVIKTRKQRRLFN).

Belongs to the DsbB family.

The protein localises to the cell inner membrane. In terms of biological role, required for disulfide bond formation in some periplasmic proteins. Acts by oxidizing the DsbA protein. The polypeptide is Disulfide bond formation protein B (Haemophilus influenzae (strain ATCC 51907 / DSM 11121 / KW20 / Rd)).